We begin with the raw amino-acid sequence, 478 residues long: Alpha-1,3-mannosyl-glycoprotein 4-beta-N-acetylglucosaminyltransferase C (478 aa).

At 1–23 (MFKFHQVKHIFEILDKMRCLRKR) the chain is on the cytoplasmic side. The chain crosses the membrane as a helical; Signal-anchor for type II membrane protein span at residues 24–44 (FTVSFLGVLVIFLLFMNLYIE). The Lumenal segment spans residues 45–478 (DSYVLEGDKQ…IIRSISIWTS (434 aa)). N-linked (GlcNAc...) asparagine glycans are attached at residues Asn84, Asn215, and Asn348.

Belongs to the glycosyltransferase 54 family. It depends on a divalent metal cation as a cofactor.

The protein localises to the golgi apparatus membrane. It catalyses the reaction N(4)-{beta-D-GlcNAc-(1-&gt;2)-alpha-D-Man-(1-&gt;3)-[beta-D-GlcNAc-(1-&gt;2)-alpha-D-Man-(1-&gt;6)]-beta-D-Man-(1-&gt;4)-beta-D-GlcNAc-(1-&gt;4)-beta-D-GlcNAc}-L-asparaginyl-[protein] + UDP-N-acetyl-alpha-D-glucosamine = N(4)-{beta-D-GlcNAc-(1-&gt;2)-[beta-D-GlcNAc-(1-&gt;4)]-alpha-D-Man-(1-&gt;3)-[beta-D-GlcNAc-(1-&gt;2)-alpha-D-Man-(1-&gt;6)]-beta-D-Man-(1-&gt;4)-beta-D-GlcNAc-(1-&gt;4)-beta-D-GlcNAc}-L-asparaginyl-[protein] + UDP + H(+). It functions in the pathway protein modification; protein glycosylation. Glycosyltransferase that participates in the transfer of N-acetylglucosamine (GlcNAc) to the core mannose residues of N-linked glycans. Catalyzes the formation of the GlcNAcbeta1-4 branch on the GlcNAcbeta1-2Manalpha1-3 arm of the core structure of N-linked glycans. Essential for the production of tri- and tetra-antennary N-linked sugar chains. Does not catalyze the transfer of GlcNAc to the Manalpha1-6 arm to form GlcNAcBeta1-4Manalpha1-6 linkage ('GnT-VI' activity). The chain is Alpha-1,3-mannosyl-glycoprotein 4-beta-N-acetylglucosaminyltransferase C (MGAT4C) from Sus scrofa (Pig).